The following is a 460-amino-acid chain: Cysteine--tRNA ligase (460 aa).

Cys28 contacts Zn(2+). A 'HIGH' region motif is present at residues 30–40 (VTIYDLCHIGH). 3 residues coordinate Zn(2+): Cys209, His234, and Glu238. A 'KMSKS' region motif is present at residues 266 to 270 (KMSKS). Lys269 provides a ligand contact to ATP.

This sequence belongs to the class-I aminoacyl-tRNA synthetase family. As to quaternary structure, monomer. Zn(2+) is required as a cofactor.

It is found in the cytoplasm. The catalysed reaction is tRNA(Cys) + L-cysteine + ATP = L-cysteinyl-tRNA(Cys) + AMP + diphosphate. In Vibrio vulnificus (strain YJ016), this protein is Cysteine--tRNA ligase.